A 146-amino-acid polypeptide reads, in one-letter code: MARLDTLKNKAEFDFVYRNAQRFFHKDFVLYMLKFSSIRESYPLRQQRIFQSIQSRNAKLHLGLSVSRKIGKAYMRNLIKRRIKAIAYENCADFKDVIFLIVVKEGIREMDFATLKNNLLASFIKMYNAKKTRNIRVLHQISHYAG.

This sequence belongs to the RnpA family. Consists of a catalytic RNA component (M1 or rnpB) and a protein subunit.

The catalysed reaction is Endonucleolytic cleavage of RNA, removing 5'-extranucleotides from tRNA precursor.. Functionally, RNaseP catalyzes the removal of the 5'-leader sequence from pre-tRNA to produce the mature 5'-terminus. It can also cleave other RNA substrates such as 4.5S RNA. The protein component plays an auxiliary but essential role in vivo by binding to the 5'-leader sequence and broadening the substrate specificity of the ribozyme. In Helicobacter hepaticus (strain ATCC 51449 / 3B1), this protein is Ribonuclease P protein component.